A 149-amino-acid polypeptide reads, in one-letter code: uncharacterized protein (149 aa).

The protein to Rhizobium NGR234A y4oM.

This is an uncharacterized protein from Sinorhizobium fredii (strain NBRC 101917 / NGR234).